A 35-amino-acid polypeptide reads, in one-letter code: Coatomer subunit alpha (35 aa).

Oligomeric complex that consists of at least the alpha, beta, beta', gamma, delta, epsilon and zeta subunits. Interacts with SCYL1. Interacts with JAGN1. Interacts with TMEM41B. Interacts with SVEP1. Probably interacts with PEX11A. Gastric, duodenal and jejunal mucosa. Circulates in the blood. Seems to be confined to specific endocrine cells.

In terms of biological role, xenin stimulates exocrine pancreatic secretion. It inhibits pentagastrin-stimulated secretion of acid, to induce exocrine pancreatic secretion and to affect small and large intestinal motility. In the gut, xenin interacts with the neurotensin receptor. This Canis lupus familiaris (Dog) protein is Coatomer subunit alpha (COPA).